The following is a 192-amino-acid chain: Protein GrpE (192 aa).

Positions 1 to 34 (MSSKEQKTPNEQVSEEMENTAEQQVEATQETGEC) are disordered. The span at 20–31 (TAEQQVEATQET) shows a compositional bias: polar residues.

Belongs to the GrpE family. As to quaternary structure, homodimer.

The protein localises to the cytoplasm. Its function is as follows. Participates actively in the response to hyperosmotic and heat shock by preventing the aggregation of stress-denatured proteins, in association with DnaK and GrpE. It is the nucleotide exchange factor for DnaK and may function as a thermosensor. Unfolded proteins bind initially to DnaJ; upon interaction with the DnaJ-bound protein, DnaK hydrolyzes its bound ATP, resulting in the formation of a stable complex. GrpE releases ADP from DnaK; ATP binding to DnaK triggers the release of the substrate protein, thus completing the reaction cycle. Several rounds of ATP-dependent interactions between DnaJ, DnaK and GrpE are required for fully efficient folding. The chain is Protein GrpE from Yersinia pseudotuberculosis serotype I (strain IP32953).